The chain runs to 353 residues: GTPase Obg (353 aa).

The region spanning 1-159 (MKFLDEAKVY…RWIWLRLKLI (159 aa)) is the Obg domain. Positions 160–327 (ADAGLVGLPN…VLRALVAVIG (168 aa)) constitute an OBG-type G domain. Residues 166 to 173 (GLPNAGKS), 191 to 195 (FTTLH), 212 to 215 (DIPG), 279 to 282 (NKID), and 308 to 310 (SGV) each bind GTP. Mg(2+) contacts are provided by S173 and T193.

The protein belongs to the TRAFAC class OBG-HflX-like GTPase superfamily. OBG GTPase family. In terms of assembly, monomer. Mg(2+) serves as cofactor.

Its subcellular location is the cytoplasm. Functionally, an essential GTPase which binds GTP, GDP and possibly (p)ppGpp with moderate affinity, with high nucleotide exchange rates and a fairly low GTP hydrolysis rate. Plays a role in control of the cell cycle, stress response, ribosome biogenesis and in those bacteria that undergo differentiation, in morphogenesis control. This chain is GTPase Obg, found in Rhodopseudomonas palustris (strain TIE-1).